The chain runs to 655 residues: Ankyrin repeat and SAM domain-containing protein 3 (655 aa).

An interaction with NEK7 region spans residues 1-421 (MSELSDEASE…PGSEPQTEKS (421 aa)). Residues Ser2 and Ser5 each carry the phosphoserine modification. 6 ANK repeats span residues 34-64 (DVPLDLHTAASIGQHEVVKECVQRGELDLNK), 68-97 (GGWTALMYASYIGHDTIVHLLLEAGVSVNV), 101-130 (EGQTPLMLASSCGNESIAYFLLQQGAELEM), 134-163 (HGWTALFHCTSAGHQQMVKFLLESGANANV), 168-197 (YGYTPLMEAAASGHEIIVQYFLNHGVKVDT), and 201-220 (SGATACMLARQFGHMKIVAL). Position 96 is a 3-hydroxyasparagine (Asn96). A phosphoserine mark is found at Ser201, Ser225, Ser243, Ser244, and Ser245. The disordered stretch occupies residues 314–426 (YRDVTSPINE…QTEKSPYSGP (113 aa)). Position 318 is a phosphothreonine (Thr318). Ser319, Ser366, Ser369, and Ser373 each carry phosphoserine. Residues 378 to 395 (KSSVRKQTRSYLKNKSRH) show a composition bias toward basic residues. One can recognise an SAM domain in the interval 424-487 (SGPQDLATLL…TSAIARWHSS (64 aa)). The stretch at 500-575 (ADRLETEMQE…AALVLDQLRA (76 aa)) forms a coiled coil. Ser540 carries the phosphoserine modification.

As to quaternary structure, homooligomer. Interacts (via SAM domain) with ANKS6 (via SAM domain). Interacts with BICC1. Interacts with NPHP1. Interacts with NEK8. Interacts with HIF1AN. Interacts with NEK7; this interaction alters the subcellular distribution of NEK7 by preventing its nuclear translocation. Post-translationally, hydroxylated at Asn-96, most probably by HIF1AN. In terms of processing, phosphorylations at Ser-5, Ser-225, Thr-318, Ser-319, Ser-366 and Ser-369 occur in a NEK7-dependent manner. Polyubiquitinated. As to expression, kidney (at protein level).

It localises to the cell projection. Its subcellular location is the cilium. The protein resides in the cytoplasm. Functionally, may be involved in vasopressin signaling in the kidney. The protein is Ankyrin repeat and SAM domain-containing protein 3 (Anks3) of Mus musculus (Mouse).